The sequence spans 389 residues: MGTNLSVPNPLGFLPDHQLDPAFGANSTNPDWDFNPIKDHWPAANQVGVGAFGPGLTPPHGGILGWSPQAQGILTTVSTIPPPASTNRQSGRQPTPISPPLRDSHPQAMQWNSTALHQALQDPRVRGLYLPAGGSSSGTVNPAPNIASHISSISARTGDPVTIMENITSGFLGPLLVLQAGFFLLTRILTIPQSLDSWWTSLNFLGGSPVCLGQNSQSPTSNHSPTSCPPICPGYRWMCLRRFIIFLFILLLCLIFLLVLLDYQGMLPVCPLIPGSTTTSTGPCKTCTTPAQGNSKFPSCCCTKPTDGNCTCIPIPSSWAFAKYLWEWASVRFSWLSLLVPFVQWFVGLSPTVWLSAIWMMWYWGPSLYSIVSPFIPLLPIFFCLWVYI.

At methionine 1 the chain carries N-acetylmethionine. Glycine 2 carries the N-myristoyl glycine; by host lipid modification. Residues 2 to 108 form a pre-S1 region; sequence GTNLSVPNPL…PPLRDSHPQA (107 aa). The segment at 2–163 is pre-S; the sequence is GTNLSVPNPL…SARTGDPVTI (162 aa). Topologically, residues 2-170 are virion surface; in external conformation; sequence GTNLSVPNPL…VTIMENITSG (169 aa). Over 2 to 242 the chain is Intravirion; in internal conformation; sequence GTNLSVPNPL…PGYRWMCLRR (241 aa). A compositionally biased stretch (polar residues) spans 77 to 95; sequence VSTIPPPASTNRQSGRQPT. The tract at residues 77 to 103 is disordered; that stretch reads VSTIPPPASTNRQSGRQPTPISPPLRD. Residues 109–163 are pre-S2; sequence MQWNSTALHQALQDPRVRGLYLPAGGSSSGTVNPAPNIASHISSISARTGDPVTI. The chain crosses the membrane as a helical span at residues 171-191; sequence FLGPLLVLQAGFFLLTRILTI. Residues 192–242 are Intravirion; in external conformation-facing; the sequence is PQSLDSWWTSLNFLGGSPVCLGQNSQSPTSNHSPTSCPPICPGYRWMCLRR. Residues 243–263 form a helical membrane-spanning segment; sequence FIIFLFILLLCLIFLLVLLDY. Residues 264–337 lie on the Virion surface side of the membrane; it reads QGMLPVCPLI…WASVRFSWLS (74 aa). A glycan (N-linked (GlcNAc...) asparagine; by host) is linked at asparagine 309. Residues 338 to 358 traverse the membrane as a helical segment; sequence LLVPFVQWFVGLSPTVWLSAI. The Intravirion portion of the chain corresponds to 359 to 364; it reads WMMWYW. The chain crosses the membrane as a helical span at residues 365–387; sequence GPSLYSIVSPFIPLLPIFFCLWV. The Virion surface portion of the chain corresponds to 388–389; the sequence is YI.

The protein belongs to the orthohepadnavirus major surface antigen family. As to quaternary structure, in its internal form (Li-HBsAg), interacts with the capsid protein and with the isoform S. Interacts with host chaperone CANX. Associates with host chaperone CANX through its pre-S2 N glycan; this association may be essential for isoform M proper secretion. In terms of assembly, interacts with isoform L. Interacts with the antigens of satellite virus HDV (HDVAgs); this interaction is required for encapsidation of HDV genomic RNA. In terms of processing, isoform M is N-terminally acetylated by host at a ratio of 90%, and N-glycosylated by host at the pre-S2 region. Post-translationally, myristoylated.

It localises to the virion membrane. Its function is as follows. The large envelope protein exists in two topological conformations, one which is termed 'external' or Le-HBsAg and the other 'internal' or Li-HBsAg. In its external conformation the protein attaches the virus to cell receptors and thereby initiating infection. This interaction determines the species specificity and liver tropism. This attachment induces virion internalization predominantly through caveolin-mediated endocytosis. The large envelope protein also assures fusion between virion membrane and endosomal membrane. In its internal conformation the protein plays a role in virion morphogenesis and mediates the contact with the nucleocapsid like a matrix protein. The middle envelope protein plays an important role in the budding of the virion. It is involved in the induction of budding in a nucleocapsid independent way. In this process the majority of envelope proteins bud to form subviral lipoprotein particles of 22 nm of diameter that do not contain a nucleocapsid. The protein is Large envelope protein of Hepatitis B virus genotype A2 subtype adw (isolate Japan/Nishioka/1983) (HBV-A).